The primary structure comprises 643 residues: Replication protein E1 (643 aa).

Residues 81–83 (KRK) carry the Nuclear localization signal motif. Phosphoserine; by host is present on residues S87, S91, and S105. The Nuclear export signal signature appears at 104-113 (ISPRLDAITL). The tract at residues 130–166 (LTDSGYGNTEVEAETQVERNGEPEDCGGGGQGRDTEG) is disordered. The segment at 181 to 347 (QQHTGTTRVL…QTIVEHGLAD (167 aa)) is DNA-binding region. The 151-residue stretch at 446 to 596 (IEFIPFLTKL…FPFDRNGNAL (151 aa)) folds into the SF3 helicase domain. 472–479 (GPPDTGKS) is an ATP binding site. K553 is covalently cross-linked (Glycyl lysine isopeptide (Lys-Gly) (interchain with G-Cter in SUMO)).

It belongs to the papillomaviridae E1 protein family. Can form hexamers. Interacts with E2 protein; this interaction increases E1 DNA binding specificity. Interacts with host DNA polymerase subunit POLA2. Interacts with host single stranded DNA-binding protein RPA1. Interacts with host TOP1; this interaction stimulates the enzymatic activity of TOP1. Post-translationally, phosphorylated. Sumoylated.

It localises to the host nucleus. It carries out the reaction Couples ATP hydrolysis with the unwinding of duplex DNA by translocating in the 3'-5' direction.. The enzyme catalyses ATP + H2O = ADP + phosphate + H(+). Its function is as follows. ATP-dependent DNA 3'-5' helicase required for initiation of viral DNA replication. It forms a complex with the viral E2 protein. The E1-E2 complex binds to the replication origin which contains binding sites for both proteins. During the initial step, a dimer of E1 interacts with a dimer of protein E2 leading to a complex that binds the viral origin of replication with high specificity. Then, a second dimer of E1 displaces the E2 dimer in an ATP-dependent manner to form the E1 tetramer. Following this, two E1 monomers are added to each half of the site, which results in the formation of two E1 trimers on the viral ori. Subsequently, two hexamers will be created. The double hexamer acts as a bi-directional helicase machinery and unwinds the viral DNA and then recruits the host DNA polymerase to start replication. The sequence is that of Replication protein E1 from Homo sapiens (Human).